Reading from the N-terminus, the 273-residue chain is Replication factor A protein 2 (273 aa).

Residues 1 to 13 (MATYQPYNEYSSV) are compositionally biased toward polar residues. The disordered stretch occupies residues 1–38 (MATYQPYNEYSSVTGGGFENSESRPGSGESETNTRVNT). S27 bears the Phosphoserine mark. The span at 29 to 38 (ESETNTRVNT) shows a compositional bias: polar residues. Positions 69-157 (VCFVGVVRNI…NIQYAVIKPI (89 aa)) form a DNA-binding region, OB. S122 bears the Phosphoserine mark.

The protein belongs to the replication factor A protein 2 family. In terms of assembly, heterotrimer of 69, 36, and 13 kDa chains. The DNA-binding activity may reside exclusively on the 69 kDa subunit. Interacts with MCM10. Phosphorylated in a cell cycle-dependent manner with phosphorylation increasing at the entry in S phase and dephosphorylation occurring at mitosis. In terms of processing, the N-terminus is blocked.

The protein resides in the nucleus. In terms of biological role, binds to single-stranded sequences participating in DNA replication in addition to those mediating transcriptional repression (URS1) and activation (CAR1). Stimulates the activity of a cognate strand exchange protein (SEP1). It cooperates with T-AG and DNA topoisomerase I to unwind template DNA containing the simian virus 40 origin of DNA replication. The chain is Replication factor A protein 2 (RFA2) from Saccharomyces cerevisiae (strain ATCC 204508 / S288c) (Baker's yeast).